Reading from the N-terminus, the 86-residue chain is Mu-theraphotoxin-Cg2a 1 (86 aa).

A signal peptide spans 1-21; it reads MKVSVVITLAVLGIMFVWASA. Residues 22 to 50 constitute a propeptide that is removed on maturation; that stretch reads AELEERGSDQRDSPAWLKSMERIFQSEER. 3 disulfides stabilise this stretch: cysteine 52-cysteine 66, cysteine 59-cysteine 71, and cysteine 65-cysteine 78. Position 84 is a phenylalanine amide (phenylalanine 84).

This sequence belongs to the neurotoxin 10 (Hwtx-1) family. 37 (Jztx-31) subfamily. In terms of tissue distribution, expressed by the venom gland.

It localises to the secreted. In terms of biological role, inhibits both peak current and fast inactivation of voltage-gated sodium channels (Nav) channels. Inhibits the inactivation of Nav on DRG neurons (EC(50)=1.77 uM) and peak current of cardiac myocytes (IC(50)=0.90 uM). The protein is Mu-theraphotoxin-Cg2a 1 of Chilobrachys guangxiensis (Chinese earth tiger tarantula).